Reading from the N-terminus, the 313-residue chain is Malate dehydrogenase (313 aa).

NAD(+)-binding positions include 11–16 and D35; that span reads GSGNIG. Substrate-binding residues include R84 and R90. Residues N97 and 120 to 122 each bind NAD(+); that span reads VTN. The substrate site is built by N122 and R153. The Proton acceptor role is filled by H177.

It belongs to the LDH/MDH superfamily. MDH type 3 family.

The catalysed reaction is (S)-malate + NAD(+) = oxaloacetate + NADH + H(+). Its function is as follows. Catalyzes the reversible oxidation of malate to oxaloacetate. This chain is Malate dehydrogenase, found in Ehrlichia ruminantium (strain Welgevonden).